Reading from the N-terminus, the 70-residue chain is Neuropeptide SIFamide (70 aa).

The signal sequence occupies residues 1–22 (MRFIVALCLFAIVMCIIHKAEG). A Phenylalanine amide modification is found at phenylalanine 34. Positions 38–70 (GVVEYDTTGRALSALCEIASETCQAWYQTLENK) are excised as a propeptide.

Expressed in antennal lobe (AL) and gnathal ganglion (GNG) with expression detected in most animals (at protein level). Not expressed in corpora cardiaca (CC) and corpora allata (CA) (at protein level).

It is found in the secreted. Functionally, ligand for the neuropeptide SIFamide receptor. This is Neuropeptide SIFamide from Agrotis ipsilon (Black cutworm moth).